Reading from the N-terminus, the 383-residue chain is tRNA(Met) cytidine acetate ligase (383 aa).

ATP is bound by residues 7–20 (ISEY…HLYQ), G102, N160, and 181–182 (RI).

The protein belongs to the TmcAL family.

The protein resides in the cytoplasm. The enzyme catalyses cytidine(34) in elongator tRNA(Met) + acetate + ATP = N(4)-acetylcytidine(34) in elongator tRNA(Met) + AMP + diphosphate. Its function is as follows. Catalyzes the formation of N(4)-acetylcytidine (ac(4)C) at the wobble position of elongator tRNA(Met), using acetate and ATP as substrates. First activates an acetate ion to form acetyladenylate (Ac-AMP) and then transfers the acetyl group to tRNA to form ac(4)C34. The sequence is that of tRNA(Met) cytidine acetate ligase from Exiguobacterium sibiricum (strain DSM 17290 / CCUG 55495 / CIP 109462 / JCM 13490 / 255-15).